A 212-amino-acid chain; its full sequence is Thymidylate kinase (212 aa).

11–18 lines the ATP pocket; it reads GLEGAGKT.

Belongs to the thymidylate kinase family.

The enzyme catalyses dTMP + ATP = dTDP + ADP. In terms of biological role, phosphorylation of dTMP to form dTDP in both de novo and salvage pathways of dTTP synthesis. The chain is Thymidylate kinase (tmk) from Buchnera aphidicola subsp. Acyrthosiphon pisum (strain APS) (Acyrthosiphon pisum symbiotic bacterium).